Reading from the N-terminus, the 859-residue chain is ATP-dependent DNA helicase PIF1 (859 aa).

The N-terminal 45 residues, M1–F45, are a transit peptide targeting the mitochondrion. 2 positions are modified to phosphoserine: S70 and S72. Residues N142–F157 are compositionally biased toward polar residues. A disordered region spans residues N142–R183. Phosphoserine is present on S169. Residues D172–E182 are compositionally biased toward polar residues. G258–S265 contributes to the ATP binding site. S584 is modified (phosphoserine). Residues Q727–F746 mediate DNA binding. The segment at K782 to E859 is disordered. Residues K800 to A809 are compositionally biased toward low complexity. The span at V844–E859 shows a compositional bias: basic and acidic residues.

Belongs to the helicase family. PIF1 subfamily. Monomer in solution. DNA binding induces dimerization. Associates with mitochondrial and telomeric DNA. Binding to mtDNA is non-specific and the protein seems to coat the entire mtDNA molecule. Binds to the telomerase RNA TLC1. Interacts with the mitochondrial single-strand DNA-binding protein RIM1. Mg(2+) is required as a cofactor. Requires Mn(2+) as cofactor. In terms of processing, phosphorylated. Undergoes RAD53-dependent phosphorylation in response to loss of mtDNA.

Its subcellular location is the nucleus. It is found in the nucleolus. The protein resides in the mitochondrion inner membrane. The catalysed reaction is Couples ATP hydrolysis with the unwinding of duplex DNA at the replication fork by translocating in the 5'-3' direction. This creates two antiparallel DNA single strands (ssDNA). The leading ssDNA polymer is the template for DNA polymerase III holoenzyme which synthesizes a continuous strand.. It catalyses the reaction ATP + H2O = ADP + phosphate + H(+). Functionally, DNA-dependent ATPase and 5'-3' DNA helicase required for the maintenance of both mitochondrial and nuclear genome stability. Efficiently unwinds G-quadruplex (G4) DNA structures and forked RNA-DNA hybrids. Appears to move along DNA in single nucleotide or base pair steps, powered by hydrolysis of 1 molecule of ATP. Processes at an unwinding rate of about 75 bp/s. Resolves G4 structures, preventing replication pausing and double-strand breaks (DSBs) at G4 motifs. Involved in the maintenance of telomeric DNA. Inhibits telomere elongation, de novo telomere formation and telomere addition to DSBs via catalytic inhibition of telomerase. Reduces the processivity of telomerase by displacing active telomerase from DNA ends. Releases telomerase by unwinding the short telomerase RNA/telomeric DNA hybrid that is the intermediate in the telomerase reaction. Involved in the maintenance of ribosomal (rDNA). Required for efficient fork arrest at the replication fork barrier within rDNA. Involved in the maintenance of mitochondrial (mtDNA). Required to maintain mtDNA under conditions that introduce dsDNA breaks in mtDNA, either preventing or repairing dsDNA breaks. May inhibit replication progression to allow time for repair. May have a general role in chromosomal replication by affecting Okazaki fragment maturation. May have a role in conjunction with DNA2 helicase/nuclease in 5'-flap extension during Okazaki fragment processing. The protein is ATP-dependent DNA helicase PIF1 of Saccharomyces cerevisiae (strain YJM789) (Baker's yeast).